A 143-amino-acid chain; its full sequence is Lutropin subunit beta (143 aa).

Residues 1–22 (MEMLQGLLLLWLLLLNVGGVWT) form the signal peptide. 6 disulfides stabilise this stretch: Cys-31/Cys-79, Cys-45/Cys-94, Cys-48/Cys-132, Cys-56/Cys-110, Cys-60/Cys-112, and Cys-115/Cys-122. Asn-35 carries an N-linked (GlcNAc...) asparagine glycan.

Belongs to the glycoprotein hormones subunit beta family. Heterodimer of a common alpha chain and a unique beta chain which confers biological specificity to thyrotropin, lutropin, follitropin and gonadotropin.

It localises to the secreted. Promotes spermatogenesis and ovulation by stimulating the testes and ovaries to synthesize steroids. In Felis catus (Cat), this protein is Lutropin subunit beta (LHB).